A 341-amino-acid polypeptide reads, in one-letter code: MPQYKLSEIAKLLNLTLQGDDIEVVGVNTLQDASPNEISFLANAKYIHQLVLSQAGAIILSKEYASRVPRALISTEPYRDFGRVLSLFSIPQGCFDGISHQAYIHPTAQVSKTATIYPFVFIGSHTVIEENTTLFPGVYIGEHCHIGKNCTIYPNTVLMANTSIGNDCIIHAGVVLGSDGFGFALTEEKQKIPQVGNVIIKDKVEIGANTTVDRGTLGTTTINENTKIDNLVQIGHGVTVGKNTVIVSQVGISGSTSIGDNCILAGQAGISGHLTIGNNVTIGPQSGIGKNIPDNQILGGSPAVDRQTFLKTSVLMPRFPELFKRIKKLEKILEKKKEHNI.

His236 (proton acceptor) is an active-site residue.

Belongs to the transferase hexapeptide repeat family. LpxD subfamily. In terms of assembly, homotrimer.

It carries out the reaction a UDP-3-O-[(3R)-3-hydroxyacyl]-alpha-D-glucosamine + a (3R)-hydroxyacyl-[ACP] = a UDP-2-N,3-O-bis[(3R)-3-hydroxyacyl]-alpha-D-glucosamine + holo-[ACP] + H(+). It participates in bacterial outer membrane biogenesis; LPS lipid A biosynthesis. In terms of biological role, catalyzes the N-acylation of UDP-3-O-acylglucosamine using 3-hydroxyacyl-ACP as the acyl donor. Is involved in the biosynthesis of lipid A, a phosphorylated glycolipid that anchors the lipopolysaccharide to the outer membrane of the cell. The polypeptide is UDP-3-O-acylglucosamine N-acyltransferase (Lawsonia intracellularis (strain PHE/MN1-00)).